The sequence spans 373 residues: uncharacterized protein (373 aa).

This sequence belongs to the glycosyltransferase 28 family.

This is an uncharacterized protein from Bacillus subtilis (strain 168).